We begin with the raw amino-acid sequence, 95 residues long: Large ribosomal subunit protein bL25 (95 aa).

This sequence belongs to the bacterial ribosomal protein bL25 family. As to quaternary structure, part of the 50S ribosomal subunit; part of the 5S rRNA/L5/L18/L25 subcomplex. Contacts the 5S rRNA. Binds to the 5S rRNA independently of L5 and L18.

Functionally, this is one of the proteins that binds to the 5S RNA in the ribosome where it forms part of the central protuberance. The sequence is that of Large ribosomal subunit protein bL25 from Shewanella pealeana (strain ATCC 700345 / ANG-SQ1).